The primary structure comprises 103 residues: Large ribosomal subunit protein bL21 (103 aa).

The protein belongs to the bacterial ribosomal protein bL21 family. In terms of assembly, part of the 50S ribosomal subunit. Contacts protein L20.

This protein binds to 23S rRNA in the presence of protein L20. This Treponema denticola (strain ATCC 35405 / DSM 14222 / CIP 103919 / JCM 8153 / KCTC 15104) protein is Large ribosomal subunit protein bL21.